Consider the following 157-residue polypeptide: Cyclic pyranopterin monophosphate synthase (157 aa).

Residues 74–76 (MCH) and 112–113 (ME) contribute to the substrate site. The active site involves Asp127.

The protein belongs to the MoaC family. Homohexamer; trimer of dimers.

The enzyme catalyses (8S)-3',8-cyclo-7,8-dihydroguanosine 5'-triphosphate = cyclic pyranopterin phosphate + diphosphate. It participates in cofactor biosynthesis; molybdopterin biosynthesis. Its function is as follows. Catalyzes the conversion of (8S)-3',8-cyclo-7,8-dihydroguanosine 5'-triphosphate to cyclic pyranopterin monophosphate (cPMP). The chain is Cyclic pyranopterin monophosphate synthase from Sulfurovum sp. (strain NBC37-1).